The sequence spans 149 residues: Large ribosomal subunit protein bL9 (149 aa).

Belongs to the bacterial ribosomal protein bL9 family.

Functionally, binds to the 23S rRNA. The sequence is that of Large ribosomal subunit protein bL9 from Leptospira interrogans serogroup Icterohaemorrhagiae serovar copenhageni (strain Fiocruz L1-130).